Reading from the N-terminus, the 249-residue chain is Ribitol 2-dehydrogenase (249 aa).

Thr20–Leu43 contributes to the NAD(+) binding site. Tyr160 functions as the Proton acceptor in the catalytic mechanism.

Belongs to the short-chain dehydrogenases/reductases (SDR) family. In terms of assembly, homotetramer.

The catalysed reaction is ribitol + NAD(+) = D-ribulose + NADH + H(+). This is Ribitol 2-dehydrogenase (rbtD) from Klebsiella aerogenes (Enterobacter aerogenes).